We begin with the raw amino-acid sequence, 442 residues long: Serum response factor-binding protein 1 (442 aa).

2 coiled-coil regions span residues 55 to 77 (EDAL…AMKE) and 118 to 140 (LLKR…RQNA). 2 disordered regions span residues 137–336 (RQNA…LETH) and 358–442 (FHSL…TFDD). 2 stretches are compositionally biased toward basic and acidic residues: residues 149-159 (ASKESQCEDIP) and 167-188 (ESQH…DPTT). Residue Lys-202 forms a Glycyl lysine isopeptide (Lys-Gly) (interchain with G-Cter in SUMO2) linkage. At Ser-215 the chain carries Phosphoserine. Over residues 237–247 (GNHSQGKASTR) the composition is skewed to polar residues. Residues 266–278 (VSEEEKEYFDDST) show a composition bias toward acidic residues. Phosphoserine is present on residues Ser-277, Ser-292, and Ser-294. A Glycyl lysine isopeptide (Lys-Gly) (interchain with G-Cter in SUMO2) cross-link involves residue Lys-329. Ser-362 is modified (phosphoserine). Residues 367-382 (SRRDPREQAPKNKAPD) show a composition bias toward basic and acidic residues.

In terms of assembly, interacts with SRF. Forms complexes with SRF and SRF cofactors ARID2, MYOCD and NKX2-5. Interacts with the N-terminus of SLC2A4.

It localises to the cytoplasm. The protein localises to the perinuclear region. Functionally, may be involved in regulating transcriptional activation of cardiac genes during the aging process. May play a role in biosynthesis and/or processing of SLC2A4 in adipose cells. This is Serum response factor-binding protein 1 from Rattus norvegicus (Rat).